The sequence spans 100 residues: NAD(P)H-quinone oxidoreductase subunit 4L, chloroplastic (100 aa).

The next 3 membrane-spanning stretches (helical) occupy residues 1 to 21 (MLEH…YGLV), 31 to 51 (MCLE…SNFF), and 63 to 83 (IFVI…VLAI).

The protein belongs to the complex I subunit 4L family. NDH is composed of at least 16 different subunits, 5 of which are encoded in the nucleus.

Its subcellular location is the plastid. It is found in the chloroplast thylakoid membrane. The enzyme catalyses a plastoquinone + NADH + (n+1) H(+)(in) = a plastoquinol + NAD(+) + n H(+)(out). The catalysed reaction is a plastoquinone + NADPH + (n+1) H(+)(in) = a plastoquinol + NADP(+) + n H(+)(out). Functionally, NDH shuttles electrons from NAD(P)H:plastoquinone, via FMN and iron-sulfur (Fe-S) centers, to quinones in the photosynthetic chain and possibly in a chloroplast respiratory chain. The immediate electron acceptor for the enzyme in this species is believed to be plastoquinone. Couples the redox reaction to proton translocation, and thus conserves the redox energy in a proton gradient. This chain is NAD(P)H-quinone oxidoreductase subunit 4L, chloroplastic, found in Cryptomeria japonica (Japanese cedar).